A 912-amino-acid polypeptide reads, in one-letter code: Tubulin polyglutamylase TTLL7 (912 aa).

The TTL domain occupies 38–390; that stretch reads KGIITANVAG…RTSDKRKNLA (353 aa). ATP-binding positions include Lys160, 166 to 167, 188 to 191, and 201 to 203; these read MG, QEYI, and KFD. Arg227 lines the L-glutamate pocket. Position 249-250 (249-250) interacts with ATP; that stretch reads TN. Residues Tyr251, Ser252, and Lys271 each contribute to the L-glutamate site. Mg(2+) is bound by residues Asp336, Glu349, and Asn351. Residue Lys367 participates in L-glutamate binding. Residues 388–450 are c-MTBD region; it reads NLAKQKAEAQ…VSQEEHENRH (63 aa). 2 disordered regions span residues 547–570 and 658–688; these read YGSS…ENEK and PTSA…STNT. A compositionally biased stretch (low complexity) spans 549-563; that stretch reads SSDSSYDSSSSSSNS. Over residues 659–671 the composition is skewed to polar residues; sequence TSASRSHSLNRAS.

The protein belongs to the tubulin--tyrosine ligase family. In terms of assembly, interacts with both alpha- and beta-tubulin (via C-terminal tubulin tails). Mg(2+) is required as a cofactor. As to expression, highly expressed in brain, testis and trachea. Expressed in brain, heart, kidney, liver, lung, muscle and trachea. In the brain, highly expressed in hippocampus, thalamus, olfactory bulb and cerebellum cortex, corpus callosum and striatum.

The protein localises to the cell projection. It is found in the cilium. The protein resides in the cytoplasm. It localises to the cytoskeleton. Its subcellular location is the cilium basal body. The protein localises to the dendrite. It is found in the perikaryon. It carries out the reaction L-glutamyl-[protein] + L-glutamate + ATP = gamma-L-glutamyl-L-glutamyl-[protein] + ADP + phosphate + H(+). The catalysed reaction is (L-glutamyl)(n)-gamma-L-glutamyl-L-glutamyl-[protein] + L-glutamate + ATP = (L-glutamyl)(n+1)-gamma-L-glutamyl-L-glutamyl-[protein] + ADP + phosphate + H(+). Its function is as follows. Polyglutamylase which modifies tubulin, generating polyglutamate side chains of variable lengths on the gamma-carboxyl group of specific glutamate residues within the C-terminal tail of tubulin. Mediates both ATP-dependent initiation and elongation steps of the polyglutamylation reaction. Preferentially modifies the beta-tubulin tail over an alpha-tail. Competes with monoglycylase TTLL3 for modification site on beta-tubulin substrate, thereby creating an anticorrelation between glycylation and glutamylation reactions. Required for neurite growth; responsible for the strong increase in tubulin polyglutamylation during postnatal neuronal maturation. The sequence is that of Tubulin polyglutamylase TTLL7 from Mus musculus (Mouse).